The chain runs to 432 residues: Serine/threonine-protein kinase Sgk1 (432 aa).

Residues 67–93 (PELMNANPSPPPSPSQQINLGPSSNPH) are disordered. The span at 82–92 (QQINLGPSSNP) shows a compositional bias: polar residues. Positions 99–356 (FHFLKVIGKG…FTEIKNHIFF (258 aa)) constitute a Protein kinase domain. Residues 105–113 (IGKGSFGKV) and lysine 128 contribute to the ATP site. The active-site Proton acceptor is aspartate 223. The 76-residue stretch at 357–432 (SPINWDDLIN…SYAPPVDSFL (76 aa)) folds into the AGC-kinase C-terminal domain.

It belongs to the protein kinase superfamily. AGC Ser/Thr protein kinase family.

The protein localises to the cytoplasm. It is found in the nucleus. It localises to the endoplasmic reticulum. The catalysed reaction is L-seryl-[protein] + ATP = O-phospho-L-seryl-[protein] + ADP + H(+). The enzyme catalyses L-threonyl-[protein] + ATP = O-phospho-L-threonyl-[protein] + ADP + H(+). Functionally, protein kinase that may play an important role in cellular stress response. May be involved in the regulation of processes such as cell survival, neuronal excitability and renal sodium excretion. In Gallus gallus (Chicken), this protein is Serine/threonine-protein kinase Sgk1 (SGK1).